The chain runs to 356 residues: MKFKLLTINPGSTSTKIAVFENEKEILSETLRHSSKELEAYKNIYEQFEFRKDTILKVLKDKNFNIQNIDAVVGRGGLLKPIVGGTYKVNEKMLKDLKAGVQGEHASNLGGIIANSIAEAFGVSAYIVDPVVVDEMEDIARFSGIPELPRKSIFHALNQKAVAKRYAKESERDYEDLNIIVAHMGGGVSVGAHKNGKIIDVNNALDGEGAFSPERSGNLPSGDLVRLCFSGKYTEDEILKKITGKGGFVAYHGTNNALDVQNAALEGDYDAKMTYNAMGYQVAKDIGSAAAVLDGKVDCIILTGGIAYNKLMTDFIAKKVSFIAPITIYPGEDEMLALAEGTLRVLSGQEEAKKYK.

This sequence belongs to the acetokinase family. In terms of assembly, homodimer.

The protein localises to the cytoplasm. It carries out the reaction butanoate + ATP = butanoyl phosphate + ADP. It participates in lipid metabolism; butanoate metabolism. In terms of biological role, catalyzes the conversion of butyryl-CoA through butyryl phosphate to butyrate. The polypeptide is Butyrate kinase 2 (buk2) (Clostridium acetobutylicum (strain ATCC 824 / DSM 792 / JCM 1419 / IAM 19013 / LMG 5710 / NBRC 13948 / NRRL B-527 / VKM B-1787 / 2291 / W)).